We begin with the raw amino-acid sequence, 474 residues long: Cysteine--tRNA ligase (474 aa).

A Zn(2+)-binding site is contributed by cysteine 29. Positions 31 to 41 (ATVQGEPHVGH) match the 'HIGH' region motif. Zn(2+) is bound by residues cysteine 211, histidine 236, and glutamate 240. Positions 267–271 (KMSKS) match the 'KMSKS' region motif. Lysine 270 contacts ATP.

It belongs to the class-I aminoacyl-tRNA synthetase family. Monomer. It depends on Zn(2+) as a cofactor.

It is found in the cytoplasm. It catalyses the reaction tRNA(Cys) + L-cysteine + ATP = L-cysteinyl-tRNA(Cys) + AMP + diphosphate. This is Cysteine--tRNA ligase from Beutenbergia cavernae (strain ATCC BAA-8 / DSM 12333 / CCUG 43141 / JCM 11478 / NBRC 16432 / NCIMB 13614 / HKI 0122).